Consider the following 213-residue polypeptide: THAP domain-containing protein 1 (213 aa).

The THAP-type zinc finger occupies 1-81; sequence MVQSCSAYGC…LKENAVPTIF (81 aa). The HCFC1-binding motif (HBM) signature appears at 134–137; it reads DHNY. Residues 139–185 form an involved in homodimer formation region; that stretch reads VEDTMHQRKRIHQLEQQVEKLRKKLKTAQQRCRRQERQLEKLKEVVH. The stretch at 139–190 forms a coiled coil; that stretch reads VEDTMHQRKRIHQLEQQVEKLRKKLKTAQQRCRRQERQLEKLKEVVHFQKEK.

This sequence belongs to the THAP1 family. In terms of assembly, homodimer. Interacts with PAWR. Component of a THAP1/THAP3-HCFC1-OGT complex that contains, either THAP1 or THAP3, HCFC1 and OGT. Interacts with OGT. Interacts (via the HBM) with HCFC1 (via the Kelch-repeat domain); the interaction recruits HCFC1 to the RRM1 promoter. Highly expressed in heart, skeletal muscle, kidney and liver. Weaker expression in brain and placenta.

The protein localises to the nucleus. It is found in the nucleoplasm. Its subcellular location is the PML body. Functionally, DNA-binding transcription regulator that regulates endothelial cell proliferation and G1/S cell-cycle progression. Specifically binds the 5'-[AT]NTNN[GT]GGCA[AGT]-3' core DNA sequence and acts by modulating expression of pRB-E2F cell-cycle target genes, including RRM1. Component of a THAP1/THAP3-HCFC1-OGT complex that is required for the regulation of the transcriptional activity of RRM1. May also have pro-apoptotic activity by potentiating both serum-withdrawal and TNF-induced apoptosis. The protein is THAP domain-containing protein 1 (THAP1) of Homo sapiens (Human).